The following is a 231-amino-acid chain: Large ribosomal subunit protein uL1 (231 aa).

Belongs to the universal ribosomal protein uL1 family. Part of the 50S ribosomal subunit.

Its function is as follows. Binds directly to 23S rRNA. The L1 stalk is quite mobile in the ribosome, and is involved in E site tRNA release. In terms of biological role, protein L1 is also a translational repressor protein, it controls the translation of the L11 operon by binding to its mRNA. The chain is Large ribosomal subunit protein uL1 from Thiobacillus denitrificans (strain ATCC 25259 / T1).